We begin with the raw amino-acid sequence, 210 residues long: Dephospho-CoA kinase (210 aa).

Residues 4-201 form the DPCK domain; sequence IVALTGGICS…NFYIYLSKQN (198 aa). 12–17 contributes to the ATP binding site; the sequence is CSGKTT.

Belongs to the CoaE family.

The protein localises to the cytoplasm. The enzyme catalyses 3'-dephospho-CoA + ATP = ADP + CoA + H(+). It participates in cofactor biosynthesis; coenzyme A biosynthesis; CoA from (R)-pantothenate: step 5/5. Functionally, catalyzes the phosphorylation of the 3'-hydroxyl group of dephosphocoenzyme A to form coenzyme A. This is Dephospho-CoA kinase from Buchnera aphidicola subsp. Schizaphis graminum (strain Sg).